We begin with the raw amino-acid sequence, 529 residues long: Peptide chain release factor 3 (529 aa).

Residues 10–278 (ARRRTFAIIS…MFVEFAPGPQ (269 aa)) form the tr-type G domain. GTP contacts are provided by residues 19–26 (SHPDAGKT), 87–91 (DTPGH), and 141–144 (NKMD).

Belongs to the TRAFAC class translation factor GTPase superfamily. Classic translation factor GTPase family. PrfC subfamily.

It localises to the cytoplasm. In terms of biological role, increases the formation of ribosomal termination complexes and stimulates activities of RF-1 and RF-2. It binds guanine nucleotides and has strong preference for UGA stop codons. It may interact directly with the ribosome. The stimulation of RF-1 and RF-2 is significantly reduced by GTP and GDP, but not by GMP. The sequence is that of Peptide chain release factor 3 from Nitratidesulfovibrio vulgaris (strain DSM 19637 / Miyazaki F) (Desulfovibrio vulgaris).